Reading from the N-terminus, the 334-residue chain is Probable tRNA pseudouridine synthase B (334 aa).

The active-site Nucleophile is the Asp82. The PUA domain maps to 250–325 (LPKIWIKDSA…IAVDVEKVFM (76 aa)).

It belongs to the pseudouridine synthase TruB family. Type 2 subfamily.

The catalysed reaction is uridine(55) in tRNA = pseudouridine(55) in tRNA. Could be responsible for synthesis of pseudouridine from uracil-55 in the psi GC loop of transfer RNAs. The sequence is that of Probable tRNA pseudouridine synthase B from Pyrococcus abyssi (strain GE5 / Orsay).